The chain runs to 330 residues: 5'-AMP-activated protein kinase subunit gamma-1 (330 aa).

The segment covering 1–12 has biased composition (low complexity); that stretch reads MESVAAESAPAP. Positions 1 to 25 are disordered; that stretch reads MESVAAESAPAPENEHSQETPESNS. CBS domains are found at residues 42 to 102, 124 to 186, and 197 to 259; these read PTSS…KSAL, SFKP…PKPE, and IGTY…NLDV. ADP-binding positions include arginine 69, 84-89, valine 129, 150-151, and lysine 169; these read MLTITD and HR. AMP is bound by residues arginine 69, 84 to 89, valine 129, histidine 150, 150 to 151, lysine 169, threonine 199, alanine 204, 225 to 226, and 241 to 244; these read MLTITD, HR, SA, and SKFD. Residues arginine 69, 84-89, valine 129, 150-151, arginine 151, and lysine 169 each bind ATP; these read MLTITD and HR. The AMPK pseudosubstrate signature appears at 137 to 158; it reads LFDAVSSLIRNKIHRLPVIDPE. ADP is bound at residue 241–244; that stretch reads SKFD. An ATP-binding site is contributed by 241-244; it reads SKFD. At serine 260 the chain carries Phosphoserine; by ULK1. Threonine 262 carries the phosphothreonine; by ULK1 modification. Residue arginine 268 participates in ADP binding. AMP is bound at residue arginine 268. Residue arginine 268 coordinates ATP. At serine 269 the chain carries Phosphoserine; by ULK1. The 58-residue stretch at 271-328 folds into the CBS 4 domain; that stretch reads YFEGVLKCYLHETLEAIINRLVEAEVHRLVVVDEHDVVKGIVSLSDILQALVLTGGEK. Residues leucine 276 and 297–298 each bind ADP; that span reads HR. AMP contacts are provided by residues leucine 276, histidine 297, 297 to 298, and 313 to 316; these read HR and SLSD. ATP is bound by residues leucine 276 and 297–298; that span reads HR.

Belongs to the 5'-AMP-activated protein kinase gamma subunit family. As to quaternary structure, AMPK is a heterotrimer of an alpha catalytic subunit (PRKAA1 or PRKAA2), a beta (PRKAB1 or PRKAB2) and a gamma non-catalytic subunits (PRKAG1, PRKAG2 or PRKAG3). Interacts with FNIP1 and FNIP2. In terms of processing, phosphorylated by ULK1 and ULK2; leading to negatively regulate AMPK activity and suggesting the existence of a regulatory feedback loop between ULK1, ULK2 and AMPK. There is some ambiguity for a phosphosite: Ser-260/Thr-262. Glycosylated; O-GlcNAcylated by OGT, promoting the AMP-activated protein kinase (AMPK) activity. In terms of tissue distribution, highly expressed in heart and brain, also found in kidney, white adipose tissue, lung and spleen.

Functionally, AMP/ATP-binding subunit of AMP-activated protein kinase (AMPK), an energy sensor protein kinase that plays a key role in regulating cellular energy metabolism. In response to reduction of intracellular ATP levels, AMPK activates energy-producing pathways and inhibits energy-consuming processes: inhibits protein, carbohydrate and lipid biosynthesis, as well as cell growth and proliferation. AMPK acts via direct phosphorylation of metabolic enzymes, and by longer-term effects via phosphorylation of transcription regulators. Also acts as a regulator of cellular polarity by remodeling the actin cytoskeleton; probably by indirectly activating myosin. Gamma non-catalytic subunit mediates binding to AMP, ADP and ATP, leading to activate or inhibit AMPK: AMP-binding results in allosteric activation of alpha catalytic subunit (PRKAA1 or PRKAA2) both by inducing phosphorylation and preventing dephosphorylation of catalytic subunits. ADP also stimulates phosphorylation, without stimulating already phosphorylated catalytic subunit. ATP promotes dephosphorylation of catalytic subunit, rendering the AMPK enzyme inactive. This Rattus norvegicus (Rat) protein is 5'-AMP-activated protein kinase subunit gamma-1 (Prkag1).